Consider the following 293-residue polypeptide: Hydroxyquinol 1,2-dioxygenase (293 aa).

Positions 164, 197, 221, and 223 each coordinate Fe cation.

This sequence belongs to the intradiol ring-cleavage dioxygenase family. In terms of assembly, homodimer. It depends on Fe(3+) as a cofactor.

It catalyses the reaction benzene-1,2,4-triol + O2 = maleylacetate + 2 H(+). It functions in the pathway aromatic compound metabolism; beta-ketoadipate pathway; 3-oxoadipate from 3,4-dihydroxybenzoate: step 2/4. Inhibited by 3,5-dichlorocatechol, chlorohydroquinone and 4,5-dibromocatechol. Catalyzes the ortho-cleavage of the aromatic ring of hydroxyquinol. This is Hydroxyquinol 1,2-dioxygenase (chqB) from Nocardioides simplex (Arthrobacter simplex).